Reading from the N-terminus, the 44-residue chain is SIFTKELWDKKLFNGSWQSAQDTYSVIEVATGXVLGEIGYATAQ.

Belongs to the aldehyde dehydrogenase family.

The enzyme catalyses benzaldehyde + NAD(+) + H2O = benzoate + NADH + 2 H(+). The polypeptide is Benzaldehyde dehydrogenase [NAD(+)] II (Acinetobacter guillouiae (Acinetobacter genomosp. 11)).